Reading from the N-terminus, the 416-residue chain is Serine hydroxymethyltransferase (416 aa).

(6S)-5,6,7,8-tetrahydrofolate-binding positions include L118 and 122–124 (GHL). K226 is subject to N6-(pyridoxal phosphate)lysine. (6S)-5,6,7,8-tetrahydrofolate is bound by residues E242 and 350–352 (SPF).

It belongs to the SHMT family. Homodimer. Pyridoxal 5'-phosphate serves as cofactor.

It localises to the cytoplasm. It carries out the reaction (6R)-5,10-methylene-5,6,7,8-tetrahydrofolate + glycine + H2O = (6S)-5,6,7,8-tetrahydrofolate + L-serine. Its pathway is one-carbon metabolism; tetrahydrofolate interconversion. It functions in the pathway amino-acid biosynthesis; glycine biosynthesis; glycine from L-serine: step 1/1. Catalyzes the reversible interconversion of serine and glycine with tetrahydrofolate (THF) serving as the one-carbon carrier. This reaction serves as the major source of one-carbon groups required for the biosynthesis of purines, thymidylate, methionine, and other important biomolecules. Also exhibits THF-independent aldolase activity toward beta-hydroxyamino acids, producing glycine and aldehydes, via a retro-aldol mechanism. This is Serine hydroxymethyltransferase from Helicobacter pylori (strain G27).